A 62-amino-acid chain; its full sequence is Photosystem II reaction center protein Z (62 aa).

A run of 2 helical transmembrane segments spans residues 8–28 and 41–61; these read ALFA…IVFA and FSGT…NSLI.

Belongs to the PsbZ family. In terms of assembly, PSII is composed of 1 copy each of membrane proteins PsbA, PsbB, PsbC, PsbD, PsbE, PsbF, PsbH, PsbI, PsbJ, PsbK, PsbL, PsbM, PsbT, PsbY, PsbZ, Psb30/Ycf12, at least 3 peripheral proteins of the oxygen-evolving complex and a large number of cofactors. It forms dimeric complexes.

Its subcellular location is the plastid. It is found in the chloroplast thylakoid membrane. May control the interaction of photosystem II (PSII) cores with the light-harvesting antenna, regulates electron flow through the 2 photosystem reaction centers. PSII is a light-driven water plastoquinone oxidoreductase, using light energy to abstract electrons from H(2)O, generating a proton gradient subsequently used for ATP formation. In Drimys granadensis, this protein is Photosystem II reaction center protein Z.